The sequence spans 279 residues: NAD-dependent protein deacylase (279 aa).

In terms of domain architecture, Deacetylase sirtuin-type spans 20 to 272 (RERLRQRIFF…PEFVEKLLKG (253 aa)). 48 to 67 (GAGISAESGIRTFRAADGLW) lines the NAD(+) pocket. Tyrosine 92 and arginine 95 together coordinate substrate. 129–132 (QNID) is an NAD(+) binding site. The active-site Proton acceptor is the histidine 147. Residues cysteine 155 and cysteine 174 each contribute to the Zn(2+) site. Residues 214 to 216 (GTS), 240 to 242 (NLE), and alanine 258 each bind NAD(+).

Belongs to the sirtuin family. Class III subfamily. Forms a 1:1 complex with acetyl-CoA synthetase (Acs). Zn(2+) serves as cofactor.

It localises to the cytoplasm. The catalysed reaction is N(6)-acetyl-L-lysyl-[protein] + NAD(+) + H2O = 2''-O-acetyl-ADP-D-ribose + nicotinamide + L-lysyl-[protein]. It carries out the reaction N(6)-succinyl-L-lysyl-[protein] + NAD(+) + H2O = 2''-O-succinyl-ADP-D-ribose + nicotinamide + L-lysyl-[protein]. The enzyme catalyses N(6)-(2-hydroxyisobutanoyl)-L-lysyl-[protein] + NAD(+) + H2O = 2''-O-(2-hydroxyisobutanoyl)-ADP-D-ribose + nicotinamide + L-lysyl-[protein]. Its activity is regulated as follows. Deacetylation is inhibited by nicotinamide. Functionally, NAD-dependent lysine deacetylase that specifically removes acetyl groups on target proteins. Also acts as a protein-lysine deacylase by mediating protein desuccinylation and de-2-hydroxyisobutyrylation. Modulates the activities of several proteins which are inactive in their acylated form. Activates the enzyme acetyl-CoA synthetase (acs) by deacetylating 'Lys-609' in the inactive, acetylated form of the enzyme. May also modulate the activity of other propionyl-adenosine monophosphate (AMP)-forming enzymes. The protein is NAD-dependent protein deacylase of Escherichia coli (strain K12).